The primary structure comprises 406 residues: MARAFLFVLDSFGVGGSPDATSYGDEGADTLGHIAEFCAAGAADREGLRSGPLSLPIMSGLGLLEIAKAATGRYPLGMPLPQKLYGLYGCANEISRGKDTPSGHWEIAGTPVTFDWGYFPTEGDAFPPELVEAICKAADLPGILGNCHASGTDIIARYGEEHIRSGKPICYTSSDSVFQIAAHEQHFGLERLISLCQIVRTLLDPYNIGRVIARPFIGETPANFERTGNRRDFSVLPPEPTLLDRLVAAERKVHAVGKIGDIFAHQGISRIIKANGNMKLMDATLKTMDEAADGDLVFTNFVDFDMVYGHRRDVAGYAAALEAFDARLPEVHRKLKPGDLLILTADHGCDPTWRGTDHTRERVPIIAYELGIRSRPIGIRQTYADIGETVAHHLGIAAGPHGRSFL.

Mn(2+) is bound by residues D10, D305, H310, D346, H347, and H358.

This sequence belongs to the phosphopentomutase family. Mn(2+) is required as a cofactor.

The protein resides in the cytoplasm. It catalyses the reaction 2-deoxy-alpha-D-ribose 1-phosphate = 2-deoxy-D-ribose 5-phosphate. The catalysed reaction is alpha-D-ribose 1-phosphate = D-ribose 5-phosphate. It functions in the pathway carbohydrate degradation; 2-deoxy-D-ribose 1-phosphate degradation; D-glyceraldehyde 3-phosphate and acetaldehyde from 2-deoxy-alpha-D-ribose 1-phosphate: step 1/2. In terms of biological role, isomerase that catalyzes the conversion of deoxy-ribose 1-phosphate (dRib-1-P) and ribose 1-phosphate (Rib-1-P) to deoxy-ribose 5-phosphate (dRib-5-P) and ribose 5-phosphate (Rib-5-P), respectively. This chain is Phosphopentomutase, found in Rhizobium rhizogenes (strain K84 / ATCC BAA-868) (Agrobacterium radiobacter).